The sequence spans 154 residues: Transcriptional repressor NrdR (154 aa).

A zinc finger lies at 3–34 (CPFCSHNDSKVIDSRPTDEGQAIRRRRECISC). The ATP-cone domain maps to 49 to 139 (LIVVKKNGNR…VYREFKDINT (91 aa)).

This sequence belongs to the NrdR family. Zn(2+) serves as cofactor.

Functionally, negatively regulates transcription of bacterial ribonucleotide reductase nrd genes and operons by binding to NrdR-boxes. This is Transcriptional repressor NrdR from Alkaliphilus oremlandii (strain OhILAs) (Clostridium oremlandii (strain OhILAs)).